The following is a 341-amino-acid chain: Glyceraldehyde-3-phosphate dehydrogenase 3 (341 aa).

Residues 13 to 14 (RI), D35, and R85 contribute to the NAD(+) site. D-glyceraldehyde 3-phosphate is bound by residues 157-159 (SCT), T188, 217-218 (TG), and R240. C158 (nucleophile) is an active-site residue. N322 contributes to the NAD(+) binding site.

The protein belongs to the glyceraldehyde-3-phosphate dehydrogenase family. Homotetramer.

Its subcellular location is the cytoplasm. It carries out the reaction D-glyceraldehyde 3-phosphate + phosphate + NAD(+) = (2R)-3-phospho-glyceroyl phosphate + NADH + H(+). It participates in carbohydrate degradation; glycolysis; pyruvate from D-glyceraldehyde 3-phosphate: step 1/5. This Caenorhabditis elegans protein is Glyceraldehyde-3-phosphate dehydrogenase 3 (gpd-3).